The following is a 130-amino-acid chain: MSKQIRKNVKKPRKKIYRGVVYIQTTQNNTIVTITNIKGDAVCWSSAGSCDLKGRRKATAYAAKLAAANAAKKARREFVLKEAKVLITGPGAARDTAIHEIHKAGIKLTILREKSGVPHNGCRPPKRRRV.

Belongs to the universal ribosomal protein uS11 family. As to quaternary structure, part of the 30S ribosomal subunit.

It localises to the plastid. The protein localises to the chloroplast. The chain is Small ribosomal subunit protein uS11c from Stigeoclonium helveticum (Green alga).